Here is a 521-residue protein sequence, read N- to C-terminus: Spermidine transporter DUR31 (521 aa).

The chain crosses the membrane as a helical span at residues 11-31; that stretch reads AIIYLSYAFMLATGLFLAWKF. N-linked (GlcNAc...) asparagine glycosylation is present at asparagine 41. 12 helical membrane passes run 47–67, 79–99, 117–137, 156–176, 187–207, 227–247, 264–284, 310–330, 354–374, 377–397, 406–426, and 453–473; these read IPLA…TTYA, LVYT…GPVI, FGMV…FLFM, ALGA…FGGF, GVCV…YIEI, LVYI…GFWL, IAAF…FLAV, WLVA…FDSL, IMLI…ADNI, IYLI…LGLA, GFDV…FGTV, and FGAF…SAAL.

This sequence belongs to the sodium:solute symporter (SSF) (TC 2.A.21) family.

The protein resides in the membrane. The catalysed reaction is spermidine(in) = spermidine(out). In terms of biological role, spermidine transporter that is also used by salivary gland-secreted histatin 5 (Hst 5) to enter into candidal cells. A major component of host nonimmune defense systems is salivary histatins, a family of small (3-4 kDa), histidine-rich, cationic proteins secreted by major salivary glands in humans and higher primates. Hst 5 is the most potent of the 12 histatin family members and has fungicidal activity against blastoconidial and filamentous forms of Candida albicans. DUR31 only functions under high concentrations of Hst 5. Hst 5 cojugates to spermidine to be uptaken by DUR31. This is Spermidine transporter DUR31 from Candida albicans (strain SC5314 / ATCC MYA-2876) (Yeast).